Consider the following 97-residue polypeptide: Large ribosomal subunit protein uL23 (97 aa).

This sequence belongs to the universal ribosomal protein uL23 family. In terms of assembly, part of the 50S ribosomal subunit. Contacts protein L29, and trigger factor when it is bound to the ribosome.

Functionally, one of the early assembly proteins it binds 23S rRNA. One of the proteins that surrounds the polypeptide exit tunnel on the outside of the ribosome. Forms the main docking site for trigger factor binding to the ribosome. This Myxococcus xanthus (strain DK1622) protein is Large ribosomal subunit protein uL23.